A 193-amino-acid polypeptide reads, in one-letter code: 7-methyl-GTP pyrophosphatase (193 aa).

The active-site Proton acceptor is D69.

It belongs to the Maf family. YceF subfamily. A divalent metal cation serves as cofactor.

It is found in the cytoplasm. It carries out the reaction N(7)-methyl-GTP + H2O = N(7)-methyl-GMP + diphosphate + H(+). Nucleoside triphosphate pyrophosphatase that hydrolyzes 7-methyl-GTP (m(7)GTP). May have a dual role in cell division arrest and in preventing the incorporation of modified nucleotides into cellular nucleic acids. This Chromohalobacter salexigens (strain ATCC BAA-138 / DSM 3043 / CIP 106854 / NCIMB 13768 / 1H11) protein is 7-methyl-GTP pyrophosphatase.